Here is a 139-residue protein sequence, read N- to C-terminus: HTH-type transcriptional regulator MntR (139 aa).

The HTH dtxR-type domain occupies 1-63 (MPTPSMEDHI…YEKYRGLTLT (63 aa)). 6 residues coordinate Mn(2+): aspartate 8, glutamate 11, histidine 77, glutamate 99, glutamate 102, and histidine 103.

Belongs to the DtxR/MntR family. As to quaternary structure, homodimer.

The protein resides in the cytoplasm. DNA binding is strongly activated by Mn(2+). Its function is as follows. Central regulator of manganese homeostasis. The polypeptide is HTH-type transcriptional regulator MntR (Lysinibacillus sphaericus (strain C3-41)).